Consider the following 191-residue polypeptide: Protein NUCLEAR FUSION DEFECTIVE 2 (191 aa).

The signal sequence occupies residues 1–29 (MATLRFTLLLLVFVVGIFFSFSSVSHVRA). Positions 48-167 (LAKLQTQIGY…IFGAIAIDAG (120 aa)) constitute an RNase III domain.

Functionally, required for karyogamy during female gametophyte development, when the two polar nuclei fuse to form the diploid central cell nucleus. The polypeptide is Protein NUCLEAR FUSION DEFECTIVE 2 (Arabidopsis thaliana (Mouse-ear cress)).